A 276-amino-acid chain; its full sequence is Rhomboid protease GlpG (276 aa).

6 helical membrane passes run 94–114, 142–162, 169–189, 192–212, 229–249, and 250–270; these read GPVT…MSLI, IFMH…WYLG, LGSG…GYVQ, FSGP…GYVW, LIIF…GMSM, and ANGA…VDTL. Ser201 acts as the Nucleophile in catalysis. The active site involves His254.

The protein belongs to the peptidase S54 family.

The protein localises to the cell inner membrane. The catalysed reaction is Cleaves type-1 transmembrane domains using a catalytic dyad composed of serine and histidine that are contributed by different transmembrane domains.. Functionally, rhomboid-type serine protease that catalyzes intramembrane proteolysis. The chain is Rhomboid protease GlpG from Salmonella paratyphi A (strain ATCC 9150 / SARB42).